Reading from the N-terminus, the 210-residue chain is MPKREYFSLPCPLSTFTMAYYWFKAFHLIGIVVWFAGLFYLVRLFVYHAEADQEPEPAKTILKKQYELMEKRLYNIITTPGMVVTVAMAIGLIFTEPEILKSGWLHIKLTFVALLLLYHFYCGRVMKKLAQGESQWSGQQFRALNEAPTILLVVIVLLAVFKNNLPLDATTWLIVALVIAMAASIQLYAKKRRRDQALLTEQQKAASAQN.

The next 5 membrane-spanning stretches (helical) occupy residues 22–42 (WFKAFHLIGIVVWFAGLFYLV), 74–94 (YNIITTPGMVVTVAMAIGLIF), 103–123 (GWLHIKLTFVALLLLYHFYCG), 141–161 (FRALNEAPTILLVVIVLLAVF), and 165–185 (LPLDATTWLIVALVIAMAASI). His-27 contributes to the heme binding site. Lys-108 lines the heme pocket.

It belongs to the HemJ family. Homodimer. Can also form higher oligomers, most probably tetramers. Interacts with Sll1106, however it is unlikely that Sll1106 is required for PPO function. It depends on heme b as a cofactor.

It localises to the cell membrane. The catalysed reaction is protoporphyrinogen IX + 3 A = protoporphyrin IX + 3 AH2. It functions in the pathway porphyrin-containing compound metabolism; protoporphyrin-IX biosynthesis; protoporphyrin-IX from protoporphyrinogen-IX: step 1/1. In terms of biological role, catalyzes the oxidation of protoporphyrinogen IX to protoporphyrin IX. Is involved in the biosynthesis of tetrapyrrole molecules like heme and chlorophyll. Does not use oxygen or artificial electron acceptors such as menadione or benzoquinone. Is functionally coupled with coproporphyrinogen III oxidase (CPO). Is essential for growth. The sequence is that of Protoporphyrinogen IX oxidase from Synechocystis sp. (strain ATCC 27184 / PCC 6803 / Kazusa).